Consider the following 370-residue polypeptide: Putative glutamate--cysteine ligase 2 (370 aa).

It belongs to the glutamate--cysteine ligase type 2 family. YbdK subfamily.

The enzyme catalyses L-cysteine + L-glutamate + ATP = gamma-L-glutamyl-L-cysteine + ADP + phosphate + H(+). Its function is as follows. ATP-dependent carboxylate-amine ligase which exhibits weak glutamate--cysteine ligase activity. In Methylibium petroleiphilum (strain ATCC BAA-1232 / LMG 22953 / PM1), this protein is Putative glutamate--cysteine ligase 2.